We begin with the raw amino-acid sequence, 428 residues long: Cholesterol 7-desaturase (428 aa).

Residues 6 to 26 (IWGFLTAHPISVVTTILIVYL) traverse the membrane as a helical segment. The Rieske domain occupies 81 to 187 (WYCVCESEKL…CIERNNNIYL (107 aa)). Positions 122, 124, 143, and 146 each coordinate [2Fe-2S] cluster.

This sequence belongs to the cholesterol 7-desaturase family. [2Fe-2S] cluster serves as cofactor. In terms of tissue distribution, expressed in intestine at all postembryonic stages, including dauer. Expression is reduced in daf-2 mutants.

The protein resides in the membrane. It carries out the reaction cholesterol + NADPH + O2 + H(+) = 7-dehydrocholesterol + NADP(+) + 2 H2O. The catalysed reaction is cholesterol + NADH + O2 + H(+) = 7-dehydrocholesterol + NAD(+) + 2 H2O. It functions in the pathway steroid hormone biosynthesis; dafachronic acid biosynthesis. In terms of biological role, catalyzes the production of 7-dehydrocholesterol (7-DHC or cholesta-5,7-dien-3beta-ol) by inserting a double bond (desaturating) at the C7-C8 single bond of cholesterol. This reaction is the first step in the synthesis of the steroid hormone Delta(7)-dafachronic acid (one of the principal steroid hormones in nematodes). Dafachronic acids bind directly to the nuclear hormone receptor (NHR) daf-12, suppressing dauer formation and inducing reproductive growth. The polypeptide is Cholesterol 7-desaturase (daf-36) (Caenorhabditis elegans).